The following is a 71-amino-acid chain: DNA gyrase inhibitor YacG (71 aa).

Cysteine 9, cysteine 12, cysteine 28, and cysteine 32 together coordinate Zn(2+). A disordered region spans residues 43-71; it reads EEKRIPSQSESNDSDEWSEMPEQDPKPFN. Positions 54–64 are enriched in acidic residues; sequence NDSDEWSEMPE.

Belongs to the DNA gyrase inhibitor YacG family. In terms of assembly, interacts with GyrB. Zn(2+) is required as a cofactor.

Inhibits all the catalytic activities of DNA gyrase by preventing its interaction with DNA. Acts by binding directly to the C-terminal domain of GyrB, which probably disrupts DNA binding by the gyrase. This chain is DNA gyrase inhibitor YacG, found in Proteus mirabilis (strain HI4320).